The sequence spans 260 residues: Pro-opiomelanocortin (260 aa).

Positions 1-25 (MLQPVWSCILALLGVFIFHVGEVRS) are cleaved as a signal peptide. Position 26 is a pyrrolidone carboxylic acid (Q26). F86 bears the Phenylalanine amide mark. N90 carries an N-linked (GlcNAc...) asparagine glycan. Positions 104-138 (EDIANYPILNLLTGSDNQNTQQGIMEDEAVDRQDS) are excised as a propeptide. V153 is subject to Valine amide.

It belongs to the POMC family. In terms of processing, specific enzymatic cleavages at paired basic residues yield the different active peptides.

Its subcellular location is the secreted. Stimulates the adrenal glands to release cortisol. Its function is as follows. Anorexigenic peptide. Increases the pigmentation of skin by increasing melanin production in melanocytes. In terms of biological role, increases the pigmentation of skin by increasing melanin production in melanocytes. Functionally, endogenous orexigenic opiate. Endogenous opiate. This chain is Pro-opiomelanocortin (pomc), found in Pelophylax ridibundus (Marsh frog).